A 345-amino-acid polypeptide reads, in one-letter code: Phenylalanine--tRNA ligase alpha subunit (345 aa).

Glu-255 contacts Mg(2+).

It belongs to the class-II aminoacyl-tRNA synthetase family. Phe-tRNA synthetase alpha subunit type 1 subfamily. As to quaternary structure, tetramer of two alpha and two beta subunits. Mg(2+) is required as a cofactor.

It localises to the cytoplasm. It catalyses the reaction tRNA(Phe) + L-phenylalanine + ATP = L-phenylalanyl-tRNA(Phe) + AMP + diphosphate + H(+). This is Phenylalanine--tRNA ligase alpha subunit from Lysinibacillus sphaericus (strain C3-41).